The primary structure comprises 287 residues: Alpha-tubulin N-acetyltransferase 2 (287 aa).

Positions 2–193 constitute an N-acetyltransferase domain; it reads VEFAFDIKHL…NNFVLYEGFF (192 aa). Residues 127–140 and 163–172 each bind acetyl-CoA; these read FYVHESRQRCGQGK and SNKMLAFMAK.

Belongs to the acetyltransferase ATAT1 family.

Its subcellular location is the midbody. It localises to the midbody ring. The catalysed reaction is L-lysyl-[alpha-tubulin] + acetyl-CoA = N(6)-acetyl-L-lysyl-[alpha-tubulin] + CoA + H(+). Specifically acetylates 'Lys-40' in alpha-tubulin on the lumenal side of microtubules. Promotes microtubule destabilization and accelerates microtubule dynamics; this activity may be independent of acetylation activity. Acetylates alpha-tubulin with a slow enzymatic rate, due to a catalytic site that is not optimized for acetyl transfer. Enters the microtubule through each end and diffuses quickly throughout the lumen of microtubules. Acetylates only long/old microtubules because of its slow acetylation rate since it does not have time to act on dynamically unstable microtubules before the enzyme is released. Main acetyltransferase responsible for alpha-tubulin 'Lys-40' acetylation in germline cells during the early stages of oogenesis. Required for normal egg chamber separation. This chain is Alpha-tubulin N-acetyltransferase 2, found in Drosophila melanogaster (Fruit fly).